A 468-amino-acid polypeptide reads, in one-letter code: Tubulin gamma chain (468 aa).

142–148 is a GTP binding site; it reads AGGTGSG.

Belongs to the tubulin family.

The protein resides in the cytoplasm. It is found in the cytoskeleton. Its subcellular location is the microtubule organizing center. In terms of biological role, tubulin is the major constituent of microtubules. The gamma chain is found at microtubule organizing centers (MTOC) such as the spindle poles, suggesting that it is involved in the minus-end nucleation of microtubule assembly. The sequence is that of Tubulin gamma chain (TUBG) from Chlamydomonas reinhardtii (Chlamydomonas smithii).